A 336-amino-acid polypeptide reads, in one-letter code: Glycerol-3-phosphate dehydrogenase [NAD(P)+] (336 aa).

Positions 11, 12, and 106 each coordinate NADPH. Sn-glycerol 3-phosphate contacts are provided by K106, G134, and S136. Position 138 (A138) interacts with NADPH. Residues K189, D242, S252, R253, and N254 each contribute to the sn-glycerol 3-phosphate site. The active-site Proton acceptor is the K189. R253 is a binding site for NADPH. V277 and E279 together coordinate NADPH.

Belongs to the NAD-dependent glycerol-3-phosphate dehydrogenase family.

Its subcellular location is the cytoplasm. It carries out the reaction sn-glycerol 3-phosphate + NAD(+) = dihydroxyacetone phosphate + NADH + H(+). The enzyme catalyses sn-glycerol 3-phosphate + NADP(+) = dihydroxyacetone phosphate + NADPH + H(+). The protein operates within membrane lipid metabolism; glycerophospholipid metabolism. Its function is as follows. Catalyzes the reduction of the glycolytic intermediate dihydroxyacetone phosphate (DHAP) to sn-glycerol 3-phosphate (G3P), the key precursor for phospholipid synthesis. The chain is Glycerol-3-phosphate dehydrogenase [NAD(P)+] from Agathobacter rectalis (strain ATCC 33656 / DSM 3377 / JCM 17463 / KCTC 5835 / VPI 0990) (Eubacterium rectale).